The sequence spans 120 residues: MARIAGVDIPRDKRVVISLTYIYGIGKPTAQILKEAGVSEDTRVRDLTEEELGRIREIVGRLKVEGDLRREVSLNIKRLMEIGCYRGLRHRRGLPVRGQNTKNNARTRKGPRRTVANKKK.

Residues 93 to 120 (GLPVRGQNTKNNARTRKGPRRTVANKKK) are disordered. Basic residues predominate over residues 105–120 (ARTRKGPRRTVANKKK).

The protein belongs to the universal ribosomal protein uS13 family. As to quaternary structure, part of the 30S ribosomal subunit. Has been shown to cross-link to S19 forming a loose heterodimer. Forms two bridges to the 50S subunit in the 70S ribosome.

Its function is as follows. Located at the top of the head of the 30S subunit, it contacts several helices of the 16S rRNA. In the 70S ribosome it contacts the 23S rRNA (bridge B1a) and protein L5 of the 50S subunit (bridge B1b), connecting the 2 subunits; these bridges are implicated in subunit movement. Contacts the tRNA in the A and P-sites. This is Small ribosomal subunit protein uS13 (rpsM) from Geobacillus stearothermophilus (Bacillus stearothermophilus).